The primary structure comprises 350 residues: Cytosolic sulfotransferase 18 (350 aa).

Residue Met1 is modified to N-acetylmethionine. Over residues 1 to 17 the composition is skewed to low complexity; sequence MESETLTAKATITTTTL. Residues 1–28 form a disordered region; it reads MESETLTAKATITTTTLPSHDETKTEST. The segment covering 19–28 has biased composition (basic and acidic residues); it reads SHDETKTEST. 93–98 contacts 3'-phosphoadenylyl sulfate; the sequence is KTGTTW. The active-site Proton acceptor is the His155. Residues Arg177, Ser185, Tyr243, and 313–315 contribute to the 3'-phosphoadenylyl sulfate site; that span reads RKG.

It belongs to the sulfotransferase 1 family. Expressed in roots, leaves and stems. Barely detected in siliques and flowers.

The protein resides in the cytoplasm. The enzyme catalyses an aliphatic (Z)-desulfo-glucosinolate + 3'-phosphoadenylyl sulfate = a (Z)-omega-(methylsulfanyl)-N-sulfo-alkylhydroximate S-glucoside + adenosine 3',5'-bisphosphate + H(+). Inhibited by phosphoadenosine 5'-phosphate (PAP). Functionally, sulfotransferase that utilizes 3'-phospho-5'-adenylyl sulfate (PAPS) as sulfonate donor to catalyze the sulfate conjugation of desulfo-glucosinolates (dsGSs), the final step in the biosynthesis of the glucosinolate core structure. Preferred substrate are the long-chain desulfo-glucosinolates, 7-methylthioheptyl and 8-methylthiooctyl, derived from methionine. Substrate preference is desulfo-benzyl glucosinolate &gt; desulfo-4-methylthiobutyl glucosinolate &gt; desulfo-6-methylthiohexyl glucosinolate &gt; desulfo-3-methylthiopropyl glucosinolate &gt; desulfo-indol-3-yl methyl glucosinolate &gt; desulfo-singrin &gt; desulfo-3-butenyl glucosinolate. This chain is Cytosolic sulfotransferase 18 (SOT18), found in Arabidopsis thaliana (Mouse-ear cress).